The sequence spans 1233 residues: MGGALGPALLLTSLFGAWAGLGPGQGEQGMTVAVVFSSSGPPQAQFRARLTPQSFLDLPLEIQPLTVGVNTTNPSSLLTQICGLLGAAHVHGIVFEDNVDTEAVAQILDFISSQTHVPILSISGGSAVVLTPKEPGSAFLQLGVSLEQQLQVLFKVLEEYDWSAFAVITSLHPGHALFLEGVRAVADASHVSWRLLDVVTLELGPGGPRARTQRLLRQLDAPVFVAYCSREEAEVLFAEAAQAGLVGPGHVWLVPNLALGSTDAPPATFPVGLISVVTESWRLSLRQKVRDGVAILALGAHSYWRQHGTLPAPAGDCRVHPGPVSPAREAFYRHLLNVTWEGRDFSFSPGGYLVQPTMVVIALNRHRLWEMVGRWEHGVLYMKYPVWPRYSASLQPVVDSRHLTVATLEERPFVIVESPDPGTGGCVPNTVPCRRQSNHTFSSGDVAPYTKLCCKGFCIDILKKLARVVKFSYDLYLVTNGKHGKRVRGVWNGMIGEVYYKRADMAIGSLTINEERSEIVDFSVPFVETGISVMVARSNGTVSPSAFLEPYSPAVWVMMFVMCLTVVAITVFMFEYFSPVSYNQNLTRGKKSGGPAFTIGKSVWLLWALVFNNSVPIENPRGTTSKIMVLVWAFFAVIFLASYTANLAAFMIQEQYIDTVSGLSDKKFQRPQDQYPPFRFGTVPNGSTERNIRSNYRDMHTHMVKFNQRSVEDALTSLKMGKLDAFIYDAAVLNYMAGKDEGCKLVTIGSGKVFATTGYGIAMQKDSHWKRAIDLALLQFLGDGETQKLETVWLSGICQNEKNEVMSSKLDIDNMAGVFYMLLVAMGLALLVFAWEHLVYWKLRHSVPNSSQLDFLLAFSRGIYSCFSGVQSLASPPRQASPDLTASSAQASVLKMLQAARDMVTTAGVSSSLDRATRTIENWGGGRRAPPPSPCPTPRSGPSPCLPTPDPPPEPSPTGWGPPDGGRAALVRRAPQPPGRPPTPGPPLSDVSRVSRRPAWEARWPVRTGHCGRHLSASERPLSPARCHYSSFPRADRSGRPFLPLFPELEDLPLLGPEQLARREALLHAAWARGSRPRHASLPSSVAEAFARPSSLPAGCTGPACARPDGHSACRRLAQAQSMCLPIYREACQEGEQAGAPAWQHRQHVCLHAHAHLPFCWGAVCPHLPPCASHGSWLSGAWGPLGHRGRTLGLGTGYRDSGGLDEISRVARGTQGFPGPCTWRRISSLESEV.

Residues 1–19 (MGGALGPALLLTSLFGAWA) form the signal peptide. Topologically, residues 20–554 (GLGPGQGEQG…SAFLEPYSPA (535 aa)) are extracellular. Asn70 and Asn73 each carry an N-linked (GlcNAc...) asparagine glycan. Cys82 and Cys317 are oxidised to a cystine. N-linked (GlcNAc...) asparagine glycans are attached at residues Asn337 and Asn438. 2 disulfides stabilise this stretch: Cys426–Cys453 and Cys433–Cys454. Ser509, Thr511, and Arg516 together coordinate L-glutamate. Residue Asn539 is glycosylated (N-linked (GlcNAc...) asparagine). The helical transmembrane segment at 555-575 (VWVMMFVMCLTVVAITVFMFE) threads the bilayer. At 576-598 (YFSPVSYNQNLTRGKKSGGPAFT) the chain is on the cytoplasmic side. The segment at residues 599-611 (IGKSVWLLWALVF) is an intramembrane region (discontinuously helical). The tract at residues 601-620 (KSVWLLWALVFNNSVPIENP) is pore-forming. Residues 612–626 (NNSVPIENPRGTTSK) lie on the Cytoplasmic side of the membrane. A helical membrane pass occupies residues 627–644 (IMVLVWAFFAVIFLASYT). Residues 645–813 (ANLAAFMIQE…EVMSSKLDID (169 aa)) are Extracellular-facing. Asn685 carries N-linked (GlcNAc...) asparagine glycosylation. Positions 687, 688, and 729 each coordinate L-glutamate. Cys743 and Cys798 are joined by a disulfide. The chain crosses the membrane as a helical span at residues 814-836 (NMAGVFYMLLVAMGLALLVFAWE). At 837-1233 (HLVYWKLRHS…RRISSLESEV (397 aa)) the chain is on the cytoplasmic side. A phosphoserine mark is found at Ser875, Ser881, and Ser912. The segment at 920 to 994 (IENWGGGRRA…GPPLSDVSRV (75 aa)) is disordered. 2 stretches are compositionally biased toward pro residues: residues 929–956 (APPP…PEPS) and 975–987 (PQPP…PGPP). The short motif at 1231-1233 (SEV) is the PDZ-binding element.

The protein belongs to the glutamate-gated ion channel (TC 1.A.10.1) family. NR2C/GRIN2C subfamily. In terms of assembly, heterotetramer. Forms heterotetrameric channels composed of two GluN1/zeta subunits (GRIN1), and two identical GluN2/epsilon subunits (GRIN2A, GRIN2B, GRIN2C or GRIN2D) or GluN3 subunits (GRIN3A or GRIN3B) (in vitro). In vivo, the subunit composition may depend on the expression levels of the different subunits. Interacts with PDZ domains of PATJ and DLG4. Interacts (via PDZ-binding motif) with SNX27 (via PDZ domain); the interaction is required for recycling to the plasma membrane when endocytosed and prevent degradation in lysosomes. As to expression, mainly expressed in brain with predominant expression is in the cerebellum, also present in the hippocampus, amygdala, caudate nucleus, corpus callosum, subthalamic nuclei and thalamus. Detected in the heart, skeletal muscle and pancreas.

It localises to the cell membrane. It is found in the postsynaptic cell membrane. The catalysed reaction is Ca(2+)(in) = Ca(2+)(out). It catalyses the reaction Na(+)(in) = Na(+)(out). It carries out the reaction K(+)(in) = K(+)(out). Component of N-methyl-D-aspartate (NMDA) receptors (NMDARs) that function as heterotetrameric, ligand-gated cation channels with high calcium permeability and voltage-dependent block by Mg(2+). Participates in synaptic plasticity for learning and memory formation by contributing to the slow phase of excitatory postsynaptic current and long-term synaptic potentiation. Channel activation requires binding of the neurotransmitter L-glutamate to the GluN2 subunit, glycine or D-serine binding to the GluN1 subunit, plus membrane depolarization to eliminate channel inhibition by Mg(2+). NMDARs mediate simultaneously the potasium efflux and the influx of calcium and sodium. Each GluN2 subunit confers differential attributes to channel properties, including activation, deactivation and desensitization kinetics, pH sensitivity, Ca2(+) permeability, and binding to allosteric modulators. In Homo sapiens (Human), this protein is Glutamate receptor ionotropic, NMDA 2C.